Consider the following 147-residue polypeptide: MVHLSSEEKSAVTALWGKVNVEEVGGEALGRLLVVYPWTQRFFESFGDLSSANAVMNNPKVKAHGKKVLAAFSEGLSHLDNLKGTFAKLSELHCDKLHVDPENFRLLGNVLVIVLSHHFGKEFTPQVQAAYQKVVAGVANALAHKYH.

Val2 is subject to N-acetylvaline. Residues 3–147 (HLSSEEKSAV…VANALAHKYH (145 aa)) form the Globin domain. Thr13 carries the phosphothreonine modification. A Phosphoserine modification is found at Ser45. An N6-acetyllysine modification is found at Lys60. His64 lines the heme b pocket. Lys83 carries the post-translational modification N6-acetyllysine. His93 contributes to the heme b binding site. Cys94 carries the post-translational modification S-nitrosocysteine. Residue Lys145 is modified to N6-acetyllysine.

The protein belongs to the globin family. Heterotetramer of two alpha chains and two beta chains. Red blood cells.

In terms of biological role, involved in oxygen transport from the lung to the various peripheral tissues. The protein is Hemoglobin subunit beta-1/2 (HBB1) of Oryctolagus cuniculus (Rabbit).